Consider the following 410-residue polypeptide: MDKINGLPDDLLVKILSYVPTDIAVSTSILSKRWEFLWMWLPNLDYTSRWCRKPGDVGLRDFIHKNLPLHRAPVIESLRFHSNSPDIKPEDIRRWIEIAVSRHVHDLDIDHFSENENIFLSSFFACKSLVTLKLRSVTLRDIPSMVCLPSLKTLLLDNVSFVEGKSLQELLSICPVLEDLSVYCDDYENTKELTIVVPSLLSLSLYIPDEWLLDGYWIDTPSLEYLKLEDWNSCDHLSLIKNMPKLREAYVDAKCFLPKSVIESITSVKHLTICSKDGYGDGFVFNQLEHLTLCVCRGDSPSLLGQLLKDSPNLRILEISVMEDHVDDVGISLDGWNQPSSVPECLLSSLQIFKWPQYLGRPEDRDIAVYILKNARHLKKTTILADRCERFVTQRRMIKELLQALPARIC.

An F-box domain is found at 1-47 (MDKINGLPDDLLVKILSYVPTDIAVSTSILSKRWEFLWMWLPNLDYT). The FBD domain maps to 335 to 385 (GWNQPSSVPECLLSSLQIFKWPQYLGRPEDRDIAVYILKNARHLKKTTILA).

The chain is FBD-associated F-box protein At5g38590 from Arabidopsis thaliana (Mouse-ear cress).